The sequence spans 136 residues: uncharacterized protein (136 aa).

2 helical membrane-spanning segments follow: residues 25 to 47 (ILKA…PHAF) and 78 to 97 (ITGA…LLTA).

Its subcellular location is the cell membrane. This is an uncharacterized protein from Bacillus subtilis (strain 168).